The chain runs to 428 residues: MKLYNLKDHNEQVSFAQAVTQGLGKNQGLFFPHDLPEFSLTEIDEMLKLDFVTRSAKILSAFIGDEIPQEILEERVRAAFAFPAPVANVESDVGCLELFHGPTLAFKDFGGRFMAQMLTHIAGDKPVTILTATSGDTGAAVAHAFYGLPNVKVVILYPRGKISPLQEKLFCTLGGNIETVAIDGDFDACQALVKQAFDDEELKVALGLNSANSINISRLLAQICYYFEAVAQLPQETRNQLVVSVPSGNFGDLTAGLLAKSLGLPVKRFIAATNVNDTVPRFLHDGQWSPKATQATLSNAMDVSQPNNWPRVEELFRRKIWQLKELGYAAVDDETTQQTMRELKELGYTSEPHAAVAYRALRDQLNPGEYGLFLGTAHPAKFKESVEAILGETLDLPKELAERADLPLLSHNLPADFAALRKLMMNHQ.

Position 107 is an N6-(pyridoxal phosphate)lysine (K107).

This sequence belongs to the threonine synthase family. Pyridoxal 5'-phosphate serves as cofactor.

The enzyme catalyses O-phospho-L-homoserine + H2O = L-threonine + phosphate. It functions in the pathway amino-acid biosynthesis; L-threonine biosynthesis; L-threonine from L-aspartate: step 5/5. Is competitively inhibited by L-threo-3-hydroxyhomoserine phosphate. In terms of biological role, catalyzes the gamma-elimination of phosphate from L-phosphohomoserine and the beta-addition of water to produce L-threonine. To a lesser extent, is able to slowly catalyze the deamination of L-threonine into alpha-ketobutyrate and that of L-serine and 3-chloroalanine into pyruvate. Is also able to rapidly convert vinylglycine to threonine, which proves that the pyridoxal p-quinonoid of vinylglycine is an intermediate in the TS reaction. This Escherichia coli (strain K12) protein is Threonine synthase (thrC).